Reading from the N-terminus, the 160-residue chain is Eukaryotic translation initiation factor 5A-3 (160 aa).

Basic and acidic residues predominate over residues 1 to 12 (MSDEEHHFESKA). The segment at 1–21 (MSDEEHHFESKADAGASKTYP) is disordered. Residue K52 is modified to Hypusine.

It belongs to the eIF-5A family. Lys-52 undergoes hypusination, a unique post-translational modification that consists in the addition of a butylamino group from spermidine to lysine side chain, leading to the formation of the unusual amino acid hypusine. eIF-5As are the only known proteins to undergo this modification, which is essential for their function.

In terms of biological role, translation factor that promotes translation elongation and termination, particularly upon ribosome stalling at specific amino acid sequence contexts. Binds between the exit (E) and peptidyl (P) site of the ribosome and promotes rescue of stalled ribosome: specifically required for efficient translation of polyproline-containing peptides as well as other motifs that stall the ribosome. Acts as a ribosome quality control (RQC) cofactor by joining the RQC complex to facilitate peptidyl transfer during CAT tailing step. The polypeptide is Eukaryotic translation initiation factor 5A-3 (EIF5A3) (Solanum tuberosum (Potato)).